A 277-amino-acid chain; its full sequence is Large ribosomal subunit protein uL2cz/uL2cy (277 aa).

2 disordered regions span residues 1–31 and 227–277; these read MAIH…NTRK and NPVD…RRSK.

It belongs to the universal ribosomal protein uL2 family. As to quaternary structure, part of the 50S ribosomal subunit.

The protein resides in the plastid. The protein localises to the chloroplast. In Manihot esculenta (Cassava), this protein is Large ribosomal subunit protein uL2cz/uL2cy (rpl2-A).